Consider the following 453-residue polypeptide: tRNA modification GTPase MnmE (453 aa).

(6S)-5-formyl-5,6,7,8-tetrahydrofolate is bound by residues Arg-28, Glu-90, and Arg-129. Residues 224-375 enclose the TrmE-type G domain; that stretch reads GLRVAIIGRP…LSSALLKLCG (152 aa). Asn-234 contacts K(+). GTP-binding positions include 234–239, 253–259, 278–281, and 356–358; these read NVGKSS, TDLPGTT, DTAG, and SAR. Ser-238 contributes to the Mg(2+) binding site. K(+) contacts are provided by Thr-253, Leu-255, and Thr-258. Thr-259 is a binding site for Mg(2+). Lys-453 is a binding site for (6S)-5-formyl-5,6,7,8-tetrahydrofolate.

It belongs to the TRAFAC class TrmE-Era-EngA-EngB-Septin-like GTPase superfamily. TrmE GTPase family. As to quaternary structure, homodimer. Heterotetramer of two MnmE and two MnmG subunits. Requires K(+) as cofactor.

Its subcellular location is the cytoplasm. Functionally, exhibits a very high intrinsic GTPase hydrolysis rate. Involved in the addition of a carboxymethylaminomethyl (cmnm) group at the wobble position (U34) of certain tRNAs, forming tRNA-cmnm(5)s(2)U34. In Synechococcus sp. (strain RCC307), this protein is tRNA modification GTPase MnmE.